A 411-amino-acid polypeptide reads, in one-letter code: Dual-specificity RNA methyltransferase RlmN (411 aa).

The active-site Proton acceptor is Glu-125. The Radical SAM core domain occupies Glu-131–Leu-380. A disulfide bridge links Cys-138 with Cys-383. Cys-145, Cys-149, and Cys-152 together coordinate [4Fe-4S] cluster. S-adenosyl-L-methionine contacts are provided by residues Gly-209 to Glu-210, Ser-241, Ser-263 to His-265, and Asn-340. Cys-383 functions as the S-methylcysteine intermediate in the catalytic mechanism.

It belongs to the radical SAM superfamily. RlmN family. [4Fe-4S] cluster is required as a cofactor.

The protein resides in the cytoplasm. The catalysed reaction is adenosine(2503) in 23S rRNA + 2 reduced [2Fe-2S]-[ferredoxin] + 2 S-adenosyl-L-methionine = 2-methyladenosine(2503) in 23S rRNA + 5'-deoxyadenosine + L-methionine + 2 oxidized [2Fe-2S]-[ferredoxin] + S-adenosyl-L-homocysteine. It carries out the reaction adenosine(37) in tRNA + 2 reduced [2Fe-2S]-[ferredoxin] + 2 S-adenosyl-L-methionine = 2-methyladenosine(37) in tRNA + 5'-deoxyadenosine + L-methionine + 2 oxidized [2Fe-2S]-[ferredoxin] + S-adenosyl-L-homocysteine. Functionally, specifically methylates position 2 of adenine 2503 in 23S rRNA and position 2 of adenine 37 in tRNAs. m2A2503 modification seems to play a crucial role in the proofreading step occurring at the peptidyl transferase center and thus would serve to optimize ribosomal fidelity. The protein is Dual-specificity RNA methyltransferase RlmN of Brucella canis (strain ATCC 23365 / NCTC 10854 / RM-666).